Reading from the N-terminus, the 124-residue chain is UPF0102 protein BL0935 (124 aa).

It belongs to the UPF0102 family.

This is UPF0102 protein BL0935 from Bifidobacterium longum (strain NCC 2705).